Consider the following 173-residue polypeptide: Flavodoxin 2 (173 aa).

A Flavodoxin-like domain is found at 3-165 (MGLFYGSSTC…RIQSWCEQIL (163 aa)).

It belongs to the flavodoxin family. The cofactor is FMN.

Low-potential electron donor to a number of redox enzymes. This chain is Flavodoxin 2 (fldB), found in Escherichia coli O157:H7.